The following is an 89-amino-acid chain: UPF0237 protein CPE1496 (89 aa).

The region spanning 4-84 (VITVVGKDKV…ISVQHEDIFN (81 aa)) is the ACT domain.

The protein belongs to the UPF0237 family.

The protein is UPF0237 protein CPE1496 of Clostridium perfringens (strain 13 / Type A).